The chain runs to 1298 residues: Phosphoribosylformylglycinamidine synthase (1298 aa).

A disordered region spans residues 298 to 328 (TAIAPFPGASTGSGGEIRDEGATGRGAKPKA). ATP is bound by residues 305 to 316 (GASTGSGGEIRD), 384 to 386 (TGY), and Ala676. Residues Asp677, Glu716, Asn720, and Asp884 each coordinate Mg(2+). Ser886 contacts ATP. In terms of domain architecture, Glutamine amidotransferase type-1 spans 1045–1298 (VAILREQGVN…MFRNARVWVD (254 aa)). The Nucleophile role is filled by Cys1138. Residues His1263 and Glu1265 contribute to the active site.

It in the N-terminal section; belongs to the FGAMS family. As to quaternary structure, monomer.

The protein resides in the cytoplasm. The enzyme catalyses N(2)-formyl-N(1)-(5-phospho-beta-D-ribosyl)glycinamide + L-glutamine + ATP + H2O = 2-formamido-N(1)-(5-O-phospho-beta-D-ribosyl)acetamidine + L-glutamate + ADP + phosphate + H(+). It participates in purine metabolism; IMP biosynthesis via de novo pathway; 5-amino-1-(5-phospho-D-ribosyl)imidazole from N(2)-formyl-N(1)-(5-phospho-D-ribosyl)glycinamide: step 1/2. Its function is as follows. Phosphoribosylformylglycinamidine synthase involved in the purines biosynthetic pathway. Catalyzes the ATP-dependent conversion of formylglycinamide ribonucleotide (FGAR) and glutamine to yield formylglycinamidine ribonucleotide (FGAM) and glutamate. The chain is Phosphoribosylformylglycinamidine synthase from Pseudomonas aeruginosa (strain ATCC 15692 / DSM 22644 / CIP 104116 / JCM 14847 / LMG 12228 / 1C / PRS 101 / PAO1).